A 204-amino-acid polypeptide reads, in one-letter code: Cytochrome P450 monooxygenase PC-23 (204 aa).

Cysteine 138 contacts heme.

It belongs to the cytochrome P450 family. It depends on heme as a cofactor.

Its pathway is secondary metabolite biosynthesis. Functionally, cytochrome P450 monooxygenase; part of the gene cluster that mediates the biosynthesis of the indole diterpenes penitrems. The geranylgeranyl diphosphate (GGPP) synthase penG catalyzes the first step in penitrem biosynthesis via conversion of farnesyl pyrophosphate and isopentyl pyrophosphate into geranylgeranyl pyrophosphate (GGPP). Condensation of indole-3-glycerol phosphate with GGPP by the prenyl transferase penC then forms 3-geranylgeranylindole (3-GGI). Epoxidation by the FAD-dependent monooxygenase penM leads to a epoxidized-GGI that is substrate of the terpene cyclase penB for cyclization to yield paspaline. Paspaline is subsequently converted to 13-desoxypaxilline by the cytochrome P450 monooxygenase penP, the latter being then converted to paxilline by the cytochrome P450 monooxygenase penQ. Paxilline is converted to beta-paxitriol via C-10 ketoreduction by the short-chain dehydrogenase PC-15 which can be monoprenylated at the C-20 by the indole diterpene prenyltransferase penD. A two-step elimination (acetylation and elimination) process performed by the O-acetyltransferase PC-16 and the P.simplicissimum ptmI-ortholog not yet identified in P.crustosum, leads to the production of the prenylated form of penijanthine. The FAD-linked oxidoreductase ptmO then converts the prenylated form of penijanthine into PC-M5 which is in turn transformed into PC-M4 by the aromatic dimethylallyltransferase PC-22. A series of oxidation steps involving 4 cytochrome P450 monooxygenases (PC-21, PC-05, PC-23, PC-20) and a FAD-dependent monooxygenase (PC-14) are required for the transformation of PC-M4 to penitrems A and E. Synthesis of these final products is proposed to proceed via penitrems D and C (PC-21, PC-05, PC-14) and penitrems B and F (PC-21, PC-05, PC-14, PC-23). The protein is Cytochrome P450 monooxygenase PC-23 of Penicillium crustosum (Blue mold fungus).